The following is a 324-amino-acid chain: D-alanine--D-alanine ligase (324 aa).

Positions 121–321 (NQYLKGFGIR…IKDVMTDIIE (201 aa)) constitute an ATP-grasp domain. 149-204 (INKIGLPCFIKPNAGGSSFGVTKVKTKEDIQPAIEKAFEESDEVMIEAFMKGTEIT) lines the ATP pocket. Positions 275, 288, and 290 each coordinate Mg(2+).

It belongs to the D-alanine--D-alanine ligase family. Mg(2+) is required as a cofactor. It depends on Mn(2+) as a cofactor.

The protein localises to the cytoplasm. It carries out the reaction 2 D-alanine + ATP = D-alanyl-D-alanine + ADP + phosphate + H(+). It participates in cell wall biogenesis; peptidoglycan biosynthesis. In terms of biological role, cell wall formation. This is D-alanine--D-alanine ligase from Phocaeicola vulgatus (strain ATCC 8482 / DSM 1447 / JCM 5826 / CCUG 4940 / NBRC 14291 / NCTC 11154) (Bacteroides vulgatus).